We begin with the raw amino-acid sequence, 1112 residues long: MAEEESDQEAERLGEELVAIVESPPGPVGLLAAGDGRGGAGGGGCGGGVGISSRDYCRRFCQVVEDYAGRWQVPLPQLQVLQTALCCFTSASASFPDECEHVQYVLSSLAVSFFELLLFFGRDEFYEEPLKDILGSFQECQNHLRRYGNVNLELVTRIIKDGGPWEDPVLQAVLKAQPASQEIVNKYLSSENPLFFELRARYLIACERIPEAMALIKSCINHPEISKDLYFHQALFTCLFMSPVEDQLFREHLLKTDCKSGIDIICNTEKEGKTLLALQLCESFLIPQLQNGDMYYIWELIFLWSKLQLKSNPSKQVFVDQCYQLLRTATNVRVIFPFMKIIKDEVEEEGLQICVEICGCALQLDLHDDPETKCLIYKTIAHFLPNDLEIVRVCALSVFFLERSLDAYHTVEELYRRPDEEYSEGMSTVQNRVRFELLPILKKGLFFDPEFWNFVMIKKNCVALLRDKSAVKLLNENTLENPSSSLKKRVDQQSVEEDQSTGETDPDDASVVQPKGQVNVKRSLSALNTSKVDHSVPRHRCMLCNKEFLGGHIVRHAQAHQKKGSFACVICGRKFRNRGLMQKHLKNHVKKIQRQQIATAQQDDPEVITLEEINGSKSLISFENGNSNTKGLEIETLTASSERNKEVIREHMAEFIKIPIAIPENAIENIIENGKPDASFNNISESLPQCDDDYEEEENEDDYEDDYDLNQETSVLHKINGTVCHPKDVYATDQEGNFKCPALGCVRIFKRIGFLNMHARTVHPTDLNVRQTVMKWSKGKCKFCQRQFEDSQHFIDHLNRHSYPNVYFCLHFNCNESFKLPFQLAQHTKSHRIFQAQCSFPECHELFEDLPLLYEHEAQHYLSKTPESSAQLSEVVPNHQEIDPFSNENQTIHHPVSTSKSRKYSTEPKTYIDTMEKKTDSLVHNGNEHSDDTVSNISLIDQKMPAIEPNPENTHSTTDLVNGHSEIEQTPLVTSDPTLKIDINRNRTENGSILPSVESQEHSALSVSQAPSKPNLTSEQTSYGLIVTKPFVRPLPPSYLDERYLSMPKRRKFLTDIVDACSDQDNMYKKPVKRLRCGKCLTTYCNAEALEAHLAQKKCQTLFGFDSDDESA.

Positions 482–514 (PSSSLKKRVDQQSVEEDQSTGETDPDDASVVQP) are disordered. The segment covering 494-508 (SVEEDQSTGETDPDD) has biased composition (acidic residues). 5 consecutive C2H2-type zinc fingers follow at residues 566–588 (FACV…LKNH), 738–763 (FKCP…RTVH), 779–801 (GKCK…LNRH), 807–831 (YFCL…TKSH), and 836–860 (AQCS…EAQH). Disordered regions lie at residues 885–906 (FSNE…KYST) and 997–1018 (VESQ…NLTS). Composition is skewed to polar residues over residues 886 to 899 (SNEN…VSTS) and 1002 to 1018 (HSAL…NLTS). Ser-1107 and Ser-1111 each carry phosphoserine.

It belongs to the krueppel C2H2-type zinc-finger protein family.

It is found in the nucleus. Functionally, may be involved in transcriptional regulation. This chain is Zinc finger protein 654, found in Mus musculus (Mouse).